The following is a 198-amino-acid chain: Holliday junction branch migration complex subunit RuvA (198 aa).

The segment at 1 to 64 is domain I; the sequence is MYEYIKGEYM…EDFIGLYGFE (64 aa). A domain II region spans residues 65-143; the sequence is SLEELEMFKM…TDELLNCIDE (79 aa). Residues 144–154 form a flexible linker region; that stretch reads FDDVTQDNSLA. The interval 154 to 198 is domain III; that stretch reads AVSEALSALISLGYTEKEAEKVLRDVDKSESVENIIKSALVKLMG.

The protein belongs to the RuvA family. Homotetramer. Forms an RuvA(8)-RuvB(12)-Holliday junction (HJ) complex. HJ DNA is sandwiched between 2 RuvA tetramers; dsDNA enters through RuvA and exits via RuvB. An RuvB hexamer assembles on each DNA strand where it exits the tetramer. Each RuvB hexamer is contacted by two RuvA subunits (via domain III) on 2 adjacent RuvB subunits; this complex drives branch migration. In the full resolvosome a probable DNA-RuvA(4)-RuvB(12)-RuvC(2) complex forms which resolves the HJ.

The protein resides in the cytoplasm. Functionally, the RuvA-RuvB-RuvC complex processes Holliday junction (HJ) DNA during genetic recombination and DNA repair, while the RuvA-RuvB complex plays an important role in the rescue of blocked DNA replication forks via replication fork reversal (RFR). RuvA specifically binds to HJ cruciform DNA, conferring on it an open structure. The RuvB hexamer acts as an ATP-dependent pump, pulling dsDNA into and through the RuvAB complex. HJ branch migration allows RuvC to scan DNA until it finds its consensus sequence, where it cleaves and resolves the cruciform DNA. The protein is Holliday junction branch migration complex subunit RuvA of Clostridium botulinum (strain Eklund 17B / Type B).